Consider the following 659-residue polypeptide: Mitochondrial Rho GTPase 1 (659 aa).

At 1–631 (MTKTRIRIVV…LTNDIDYRQT (631 aa)) the chain is on the cytoplasmic side. Residues 3 to 183 (KTRIRIVVCG…FYLCQRTITN (181 aa)) form the Miro 1 domain. Residues 12–19 (GDSGVGKT), 61–63 (DTG), and 115–118 (NKCD) each bind GTP. EF-hand domains follow at residues 199–234 (LGVLALKRVFVLSDMDQDGFLNDDEITKLQKKCFSK) and 328–363 (LGYRFFVDTFLKYDKDNDGGLNNDELHLLFKTTPGL). Ca(2+) is bound by residues D212, D214, D216, E223, D341, D343, D345, and E352. One can recognise a Miro 2 domain in the interval 444–609 (RKVLNCYMLG…FIKLTEVALE (166 aa)). GTP contacts are provided by residues 453-460 (GKGNSGKS), 489-493 (ELKGG), and 558-561 (LKAD). Residues 632-652 (IVAISSVVGFASLFTFTALKI) form a helical; Anchor for type IV membrane protein membrane-spanning segment. Over 653–659 (YSSFKNT) the chain is Mitochondrial intermembrane.

The protein belongs to the mitochondrial Rho GTPase family.

The protein resides in the mitochondrion outer membrane. Functionally, mitochondrial GTPase involved in mitochondrial trafficking. Probably involved in control of anterograde transport of mitochondria and their subcellular distribution. The sequence is that of Mitochondrial Rho GTPase 1 (GEM1) from Kluyveromyces lactis (strain ATCC 8585 / CBS 2359 / DSM 70799 / NBRC 1267 / NRRL Y-1140 / WM37) (Yeast).